The chain runs to 315 residues: Taste receptor type 2 member 3 (315 aa).

Residues 1-5 (MGLTD) are Extracellular-facing. A helical transmembrane segment spans residues 6-26 (GVFLIVCGAQFTLGILXNGFI). Residues 27 to 41 (GLVNGRSWFKTKRMS) lie on the Cytoplasmic side of the membrane. A helical membrane pass occupies residues 42–62 (LSDFIIATLALSRIILLCIIL). At 63–93 (TDSFLIVFSVKEHDSGIIMQLIDVFWTFTNH) the chain is on the extracellular side. Residues 94–114 (LSIWFATCLGVLYCLKIASFS) traverse the membrane as a helical segment. Topologically, residues 115–127 (HPTFLWLKWRVSR) are cytoplasmic. The chain crosses the membrane as a helical span at residues 128 to 148 (VMVWMLLGALLLSCGSTASLI). Over 149 to 185 (NEFKLYSVLRGIEATRNVTEHFRKKRNEYYLIHVLGT) the chain is Extracellular. N-linked (GlcNAc...) asparagine glycosylation occurs at Asn-165. Residues 186–206 (LWYLPPLVVSLASYFLLIFSL) traverse the membrane as a helical segment. The Cytoplasmic segment spans residues 207–233 (GRHTRQMLQNSTSSRDPSTEAHKRAIR). Residues 234–254 (IILSFFFLFLLYFLAFLIASF) form a helical membrane-spanning segment. Residues 255–265 (GNFLPETKMAK) are Extracellular-facing. The helical transmembrane segment at 266-286 (MIGEVMTMFYPAGHSFIVILG) threads the bilayer. The Cytoplasmic portion of the chain corresponds to 287–315 (NSKLKQTFVEMLRCESGHLKPGSKGPIFS).

This sequence belongs to the G-protein coupled receptor T2R family.

The protein resides in the membrane. Gustducin-coupled receptor implicated in the perception of bitter compounds in the oral cavity and the gastrointestinal tract. Signals through PLCB2 and the calcium-regulated cation channel TRPM5. This Papio hamadryas (Hamadryas baboon) protein is Taste receptor type 2 member 3 (TAS2R3).